A 206-amino-acid polypeptide reads, in one-letter code: Glutathione S-transferase 1 (206 aa).

Residues 2 to 79 (PQYKLTYFDI…YLGRQFGLAG (78 aa)) enclose the GST N-terminal domain. Glutathione contacts are provided by residues Y8, W39, K43, 49–51 (GQL), and 63–64 (QS). The 126-residue stretch at 81-206 (TPMEEAQVDS…WIAERPKTPY (126 aa)) folds into the GST C-terminal domain.

The protein belongs to the GST superfamily. Sigma family.

It catalyses the reaction RX + glutathione = an S-substituted glutathione + a halide anion + H(+). In terms of biological role, conjugation of reduced glutathione to a wide number of exogenous and endogenous hydrophobic electrophiles. Can also function as a GSH peroxidase. The sequence is that of Glutathione S-transferase 1 (GST1) from Ascaris suum (Pig roundworm).